The chain runs to 176 residues: Ribosome maturation factor RimP (176 aa).

The disordered stretch occupies residues Leu143–Ile176.

Belongs to the RimP family.

It is found in the cytoplasm. In terms of biological role, required for maturation of 30S ribosomal subunits. The sequence is that of Ribosome maturation factor RimP from Chlorobium luteolum (strain DSM 273 / BCRC 81028 / 2530) (Pelodictyon luteolum).